The primary structure comprises 261 residues: MPKRSEYRQGTPNWVDLQTTDQSAAKKFYTSLFGWGYDDNPVPGGGGVYSMATLNGEAVAAIAPMPPGAPEGMPPIWNTYIAVDDVDAVVDKVVPGGGQVMMPAFDIGDAGRMSFITDPTGAAVGLWQANRHIGATLVNETGTLIWNELLTDKPDLALAFYEAVVGLTHSSMEIAAGQNYRVLKAGDAEVGGCMEPPMPGVPNHWHVYFAVDDADATAAKAAAAGGQVIAEPADIPSVGRFAVLSDPQGAIFSVLKPAPQQ.

VOC domains lie at 11–129 (TPNW…LWQA) and 143–257 (TLIW…VLKP). 2 glyoxalase regions span residues 13-123 (NWVD…TGAA) and 149-252 (LLTD…GAIF).

The protein is Putative glyoxylase CFP32 of Mycobacterium bovis (strain ATCC BAA-935 / AF2122/97).